A 64-amino-acid chain; its full sequence is Prokaryotic ubiquitin-like protein Pup (64 aa).

Residues 1 to 38 (MAQEQTKRGGGGGEDDDPTGSTAAGQERREKLTEETDD) form a disordered region. The segment at 21–58 (STAAGQERREKLTEETDDLLDEIDDVLEENAEDFVRAY) is ARC ATPase binding. Positions 23–52 (AAGQERREKLTEETDDLLDEIDDVLEENAE) form a coiled coil. Residue glutamine 64 is modified to Deamidated glutamine. Glutamine 64 participates in a covalent cross-link: Isoglutamyl lysine isopeptide (Gln-Lys) (interchain with K-? in acceptor proteins).

It belongs to the prokaryotic ubiquitin-like protein family. As to quaternary structure, strongly interacts with the proteasome-associated ATPase ARC through a hydrophobic interface; the interacting region of Pup lies in its C-terminal half. There is one Pup binding site per ARC hexamer ring. Post-translationally, is modified by deamidation of its C-terminal glutamine to glutamate by the deamidase Dop, a prerequisite to the subsequent pupylation process.

The protein operates within protein degradation; proteasomal Pup-dependent pathway. Functionally, protein modifier that is covalently attached to lysine residues of substrate proteins, thereby targeting them for proteasomal degradation. The tagging system is termed pupylation. This chain is Prokaryotic ubiquitin-like protein Pup, found in Mycolicibacterium gilvum (strain PYR-GCK) (Mycobacterium gilvum (strain PYR-GCK)).